We begin with the raw amino-acid sequence, 427 residues long: 3-phosphoshikimate 1-carboxyvinyltransferase (427 aa).

3-phosphoshikimate is bound by residues Lys22, Ser23, and Arg27. A phosphoenolpyruvate-binding site is contributed by Lys22. Positions 96 and 124 each coordinate phosphoenolpyruvate. The 3-phosphoshikimate site is built by Ser169, Ser170, Gln171, Ser197, Asp313, Asn336, and Lys340. Gln171 is a binding site for phosphoenolpyruvate. The Proton acceptor role is filled by Asp313. Phosphoenolpyruvate contacts are provided by Arg344, Arg386, and Lys411.

Belongs to the EPSP synthase family. In terms of assembly, monomer.

Its subcellular location is the cytoplasm. It carries out the reaction 3-phosphoshikimate + phosphoenolpyruvate = 5-O-(1-carboxyvinyl)-3-phosphoshikimate + phosphate. It participates in metabolic intermediate biosynthesis; chorismate biosynthesis; chorismate from D-erythrose 4-phosphate and phosphoenolpyruvate: step 6/7. Functionally, catalyzes the transfer of the enolpyruvyl moiety of phosphoenolpyruvate (PEP) to the 5-hydroxyl of shikimate-3-phosphate (S3P) to produce enolpyruvyl shikimate-3-phosphate and inorganic phosphate. The protein is 3-phosphoshikimate 1-carboxyvinyltransferase of Salmonella agona (strain SL483).